Consider the following 417-residue polypeptide: Biofilm dispersion protein BdlA (417 aa).

One can recognise a PAS 1 domain in the interval 1-66 (MAALDRSMAR…RRFWERLRRG (66 aa)). One can recognise a PAC 1 domain in the interval 67–114 (EHFSGRCKRITREGRPLWLEATYNPVRDGQGRLLKVVKYASDIDAIVH). In terms of domain architecture, PAS 2 spans 115 to 188 (QEHEMQSKLD…ADLWRRLNRG (74 aa)). The 51-residue stretch at 191-241 (VTGQFRRVHRNGQPVWLEASYNPVYDADGKLYKVVKFASDVSDRMRRYQAE) folds into the PAC 2 domain. A Methyl-accepting transducer domain is found at 242-417 (ADNAHQAHTL…QFSRTLNADL (176 aa)).

In terms of biological role, essential for biofilm dispersion by sensing environmental cues. May be involved in sensing and transducing signals within cells, resulting in the modulation of c-di-GMP levels, swimming motility and adhesiveness of the bacterial cell surface. The polypeptide is Biofilm dispersion protein BdlA (bdlA) (Pseudomonas aeruginosa (strain ATCC 15692 / DSM 22644 / CIP 104116 / JCM 14847 / LMG 12228 / 1C / PRS 101 / PAO1)).